A 190-amino-acid chain; its full sequence is Translation initiation factor IF-3 (190 aa).

Positions 159 to 190 (QSEVQQKPKREGRNMIMFLSPRKSPLIKKDNE) are disordered.

The protein belongs to the IF-3 family. As to quaternary structure, monomer.

The protein resides in the cytoplasm. In terms of biological role, IF-3 binds to the 30S ribosomal subunit and shifts the equilibrium between 70S ribosomes and their 50S and 30S subunits in favor of the free subunits, thus enhancing the availability of 30S subunits on which protein synthesis initiation begins. This chain is Translation initiation factor IF-3, found in Prochlorococcus marinus (strain MIT 9215).